The primary structure comprises 297 residues: Nitrogenase iron protein (297 aa).

11–18 (GKGGIGKS) serves as a coordination point for ATP. Position 99 (Cys-99) interacts with [4Fe-4S] cluster. An ADP-ribosylarginine; by dinitrogenase reductase ADP-ribosyltransferase modification is found at Arg-102. Cys-133 provides a ligand contact to [4Fe-4S] cluster.

Belongs to the NifH/BchL/ChlL family. Homodimer. Requires [4Fe-4S] cluster as cofactor. Post-translationally, the reversible ADP-ribosylation of Arg-102 inactivates the nitrogenase reductase and regulates nitrogenase activity.

The enzyme catalyses N2 + 8 reduced [2Fe-2S]-[ferredoxin] + 16 ATP + 16 H2O = H2 + 8 oxidized [2Fe-2S]-[ferredoxin] + 2 NH4(+) + 16 ADP + 16 phosphate + 6 H(+). In terms of biological role, the key enzymatic reactions in nitrogen fixation are catalyzed by the nitrogenase complex, which has 2 components: the iron protein and the molybdenum-iron protein. This Rhizobium etli protein is Nitrogenase iron protein (nifH).